The chain runs to 360 residues: Viral protein TPX (360 aa).

The interval 269-289 (TVTPISSPSPTPTPTPTPTPT) is disordered. Residues 270 to 291 (VTPISSPSPTPTPTPTPTPTPT) form a Thr-Pro(N) repeat. The segment covering 275–289 (SPSPTPTPTPTPTPT) has biased composition (pro residues). The 3 Thr-Pro repeats regions and two near identical repeats stretch occupies residues 278–353 (PTPTPTPTPT…PTPTPTPTPT (76 aa)). Positions 292–301 (YDITYVVFDV) form a repeat. The stretch at 302 to 322 (TPSPTPTPTLTSTPTPTPTPT) is one Thr-Pro(N) repeat. A repeat spans 323–332 (YDITYVIFDV). Positions 332-360 (VTPSPTPTPTPTPTPTPTPTPTSTTSSNI) are disordered. The stretch at 333–353 (TPSPTPTPTPTPTPTPTPTPT) is one Thr-Pro(N) repeat. Over residues 335 to 351 (SPTPTPTPTPTPTPTPT) the composition is skewed to pro residues.

The sequence is that of Viral protein TPX from Thermoproteus tenax (TTV1).